We begin with the raw amino-acid sequence, 543 residues long: UPF0324 membrane protein RB9488 (543 aa).

Over residues Met-1–Asp-22 the composition is skewed to low complexity. The tract at residues Met-1–Leu-41 is disordered. A helical membrane pass occupies residues Trp-51–Pro-73. The interval Val-91 to Ala-120 is disordered. The next 11 membrane-spanning stretches (helical) occupy residues Ile-160–Asn-182, Ala-189–Gly-211, Glu-221–Leu-243, Leu-270–Tyr-292, Asn-307–Cys-329, Leu-336–Ile-358, Gly-368–Gly-390, Ile-403–Phe-422, Ile-437–Tyr-459, Thr-479–Thr-496, and Leu-511–Phe-533.

This sequence belongs to the UPF0324 family.

It localises to the cell membrane. The sequence is that of UPF0324 membrane protein RB9488 from Rhodopirellula baltica (strain DSM 10527 / NCIMB 13988 / SH1).